The chain runs to 784 residues: Toll-like receptor 2 (784 aa).

Residues 1 to 20 form the signal peptide; sequence MPHTLWMVWVLGVIISLSKE. At 21-587 the chain is on the extracellular side; sequence ESSNQASLSC…VRLSVSECHR (567 aa). Cysteine 30 and cysteine 36 are oxidised to a cystine. 19 LRR repeats span residues 54–77, 78–101, 102–125, 126–150, 151–175, 176–199, 200–223, 224–250, 251–278, 279–308, 309–337, 338–361, 362–388, 389–414, 415–437, 438–457, 458–478, 479–500, and 501–524; these read VKCLDLSNNRITYISNSDLQRYVN, LQALVLTSNGINTIEEDSFSSLGR, LEHLDLSYNYLSNLSSSWFKPLSS, LKFLNLLGNPYKTLGETSLFSHLTK, LRILRVGNMDTFTKIQRKDFAGLTF, LEELEIDASDLQSYEPKSLKSIQN, VSHLILHMKQHILLLEIFVDLTSS, VECLELRDTDLNTFHFSELSTGETNSL, IKKFTFRNVKITDESLFQVMKLLSQISG, LLELEFDDCTLNGVGDFRGSDNDRVIDPGK, VETLTIRRLHIPQFYSFNDLSTLYPLTER, VKRITVENSKVFLVPCLLSRHLKS, LEYLDLSENLMVEEYLKNSACEDAWPS, LQTLILRQNHLASLGKIGETLLTLKN, LTNLDISKNTFHYMPETCQWPEK, MKYLNLSSTRIHSVTGCIPK, TLEILDISNNNLNLFSLNLPQ, LKELYISRNKLMTLPDASLLPM, and LLVLKISRNTITTFSKEQLDSFHT. N-linked (GlcNAc...) asparagine glycosylation is present at asparagine 114. N-linked (GlcNAc...) asparagine glycosylation occurs at asparagine 199. The cysteines at positions 353 and 382 are disulfide-linked. An N-linked (GlcNAc...) asparagine glycan is attached at asparagine 414. A disulfide bridge links cysteine 432 with cysteine 454. N-linked (GlcNAc...) asparagine glycosylation is present at asparagine 442. One can recognise an LRRCT domain in the interval 525–579; sequence LKTLEAGGNNFICSCEFLSFTQEQQALAKVLVDWPANYLCDSPSHVRGQRVQDVR. The helical transmembrane segment at 588–608 threads the bilayer; the sequence is AALVSGMCCALFLLILLMGVL. Over 609-784 the chain is Cytoplasmic; sequence CHRFHGLWYM…WVNLRAAIKS (176 aa). One can recognise a TIR domain in the interval 639 to 782; it reads ICYDAFVSYS…GFWVNLRAAI (144 aa). Lysine 754 participates in a covalent cross-link: Glycyl lysine isopeptide (Lys-Gly) (interchain with G-Cter in ubiquitin). Positions 761-778 match the ATG16L1-binding motif motif; the sequence is YLEWPMDEARQEGFWVNL.

Belongs to the Toll-like receptor family. In terms of assembly, interacts with LY96, TLR1 and TLR6 (via extracellular domain). TLR2 seems to exist in heterodimers with either TLR1 or TLR6 before stimulation by the ligand. The heterodimers form bigger oligomers in response to their corresponding ligands as well as further heterotypic associations with other receptors such as CD14 and/or CD36. Binds MYD88 (via TIR domain). Interacts with TICAM1. Interacts with CNPY3. Interacts with ATG16L1. Interacts with PPP1R11. Interacts with TICAM2. Interacts with TIRAP. In terms of processing, ubiquitinated at Lys-754 by PPP1R11, leading to its degradation. Deubiquitinated by USP2. Glycosylation of Asn-442 is critical for secretion of the N-terminal ectodomain of TLR2.

Its subcellular location is the membrane. The protein localises to the cytoplasmic vesicle. It localises to the phagosome membrane. The protein resides in the membrane raft. Functionally, cooperates with LY96 to mediate the innate immune response to bacterial lipoproteins and other microbial cell wall components. Cooperates with TLR1 or TLR6 to mediate the innate immune response to bacterial lipoproteins or lipopeptides. Acts via MYD88 and TRAF6, leading to NF-kappa-B activation, cytokine secretion and the inflammatory response. May also promote apoptosis in response to lipoproteins. Forms activation clusters composed of several receptors depending on the ligand, these clusters trigger signaling from the cell surface and subsequently are targeted to the Golgi in a lipid-raft dependent pathway. Forms the cluster TLR2:TLR6:CD14:CD36 in response to diacylated lipopeptides and TLR2:TLR1:CD14 in response to triacylated lipopeptides. This chain is Toll-like receptor 2 (TLR2), found in Macaca mulatta (Rhesus macaque).